A 398-amino-acid polypeptide reads, in one-letter code: Putative F-box/kelch-repeat protein At2g29780 (398 aa).

The disordered stretch occupies residues 1–46 (MAIISETSDDGSHGGVPNKKPEELHKNPKEDDHQEEEVENHPPIPR). Over residues 19 to 32 (KKPEELHKNPKEDD) the composition is skewed to basic and acidic residues. Positions 43 to 90 (PIPRQIPQALIRRTVALIKRCHYPSLSLLSKAFRIVISSPELHQTRSS) constitute an F-box domain. Kelch repeat units lie at residues 148–195 (KMYV…VING), 196–241 (KIYV…GFVT), 243–289 (VVMQ…VIED), and 295–342 (DPYC…GGKL).

This chain is Putative F-box/kelch-repeat protein At2g29780, found in Arabidopsis thaliana (Mouse-ear cress).